The sequence spans 240 residues: Large ribosomal subunit protein uL3 (240 aa).

Disordered regions lie at residues 139–164 and 215–240; these read VSHR…KMPG and DAPK…QEGV. Q151 carries the N5-methylglutamine modification. The segment covering 225–240 has biased composition (low complexity); that stretch reads ADGGEQAAPAAEQEGV.

The protein belongs to the universal ribosomal protein uL3 family. In terms of assembly, part of the 50S ribosomal subunit. Forms a cluster with proteins L14 and L19. In terms of processing, methylated by PrmB.

In terms of biological role, one of the primary rRNA binding proteins, it binds directly near the 3'-end of the 23S rRNA, where it nucleates assembly of the 50S subunit. The chain is Large ribosomal subunit protein uL3 from Rhodopseudomonas palustris (strain BisA53).